A 177-amino-acid polypeptide reads, in one-letter code: Large ribosomal subunit protein uL6 (177 aa).

It belongs to the universal ribosomal protein uL6 family. In terms of assembly, part of the 50S ribosomal subunit.

In terms of biological role, this protein binds to the 23S rRNA, and is important in its secondary structure. It is located near the subunit interface in the base of the L7/L12 stalk, and near the tRNA binding site of the peptidyltransferase center. The protein is Large ribosomal subunit protein uL6 of Paramagnetospirillum magneticum (strain ATCC 700264 / AMB-1) (Magnetospirillum magneticum).